A 487-amino-acid polypeptide reads, in one-letter code: Probable cytochrome P450 516A1 (487 aa).

The helical transmembrane segment at 1–21 threads the bilayer; it reads MIILLLSIIIFILYIVKIFKN. Cys-434 contacts heme.

It belongs to the cytochrome P450 family. It depends on heme as a cofactor.

It is found in the membrane. This is Probable cytochrome P450 516A1 (cyp516A1) from Dictyostelium discoideum (Social amoeba).